The primary structure comprises 175 residues: Ribulose bisphosphate carboxylase small subunit, chloroplastic (175 aa).

The transit peptide at 1 to 34 (MSFATTNKTIVPCATTKQIVRPRFLSNGTISKSR) directs the protein to the chloroplast.

The protein belongs to the RuBisCO small chain family. As to quaternary structure, heterohexadecamer of 8 large and 8 small subunits.

The protein localises to the plastid. The protein resides in the chloroplast. Functionally, ruBisCO catalyzes two reactions: the carboxylation of D-ribulose 1,5-bisphosphate, the primary event in carbon dioxide fixation, as well as the oxidative fragmentation of the pentose substrate. Both reactions occur simultaneously and in competition at the same active site. Although the small subunit is not catalytic it is essential for maximal activity. The polypeptide is Ribulose bisphosphate carboxylase small subunit, chloroplastic (Batophora oerstedii (Green alga)).